A 140-amino-acid chain; its full sequence is MPSLRDLSLERDQELNQLRARINQLGKTGKEEANDFVGLNISNEPVYDTVIQTGQSSNATNSFVQETIQKTKQKESGQPYIIPQKNEHQRYIDKVCETSDLKAKLAPIMEVLEKKTNEKIKGIIRKRVLQEPDRDNDDSG.

Phosphoserine is present on Ser-139.

In terms of assembly, belongs to the NTC complex (or PRP19-associated complex), composed of at least CEF1, CLF1, ISY1, NTC20, SNT309, SYF1, SYF2, and PRP19. The NTC complex associates with the spliceosome after the release of the U1 and U4 snRNAs and forms the CWC spliceosome subcomplex (or CEF1-associated complex) reminiscent of a late-stage spliceosome composed also of the U2, U5 and U6 snRNAs and at least BUD13, BRR2, CDC40, CUS1, CWC2, CWC15, CWC21, CWC22, CWC23, CWC24, CWC25, CWC27, ECM2, HSH155, IST3, LEA1, MSL1, PRP8, PRP9, PRP11, PRP21, PRP22, PRP45, PRP46, SLU7, SMB1, SMD1, SMD2, SMD3, SMX2, SMX3, SNU114, SPP2, RSE1 and YJU2. Interacts with CEF1, CLF1, ISY1, PRP46, and SYF1.

The protein resides in the nucleus. Functionally, involved in pre-mRNA splicing. As a component of the NTC complex, associates to the spliceosome to mediate conformational rearrangement or to stabilize the structure of the spliceosome after U4 snRNA dissociation, which leads to spliceosome maturation. This Saccharomyces cerevisiae (strain ATCC 204508 / S288c) (Baker's yeast) protein is Pre-mRNA-splicing factor NTC20 (NTC20).